We begin with the raw amino-acid sequence, 524 residues long: Cytochrome P450 704B1 (524 aa).

A helical transmembrane segment spans residues 2–22; the sequence is SLCLVIACMVTSWIFLHRWGQ. Cysteine 471 serves as a coordination point for heme.

This sequence belongs to the cytochrome P450 family. Heme is required as a cofactor.

It localises to the membrane. It catalyses the reaction an omega-methyl-long-chain fatty acid + reduced [NADPH--hemoprotein reductase] + O2 = an omega-hydroxy-long-chain fatty acid + oxidized [NADPH--hemoprotein reductase] + H2O + H(+). Its function is as follows. Involved in pollen wall development. Catalyzes the conversion of long-chain fatty acids to the corresponding omega-hydroxylated fatty acids. Omega-hydroxylated fatty acids, together with in-chain hydroxylated fatty acids, are key monomeric aliphatic building blocks for sporopollenin synthesis during exine formation. This is Cytochrome P450 704B1 (CYP704B1) from Arabidopsis thaliana (Mouse-ear cress).